Consider the following 274-residue polypeptide: uncharacterized protein (274 aa).

Position 104–111 (104–111) interacts with ATP; the sequence is GVFAIGKS.

This is an uncharacterized protein from Mycoplasma genitalium (strain ATCC 33530 / DSM 19775 / NCTC 10195 / G37) (Mycoplasmoides genitalium).